Reading from the N-terminus, the 213-residue chain is Thiamine import ATP-binding protein ThiQ (213 aa).

Positions 1 to 212 (MIELNVTFDY…EQGRIVADQL (212 aa)) constitute an ABC transporter domain. 31 to 38 (GESGAGKS) is an ATP binding site.

Belongs to the ABC transporter superfamily. Thiamine importer (TC 3.A.1.19.1) family. The complex is composed of two ATP-binding proteins (ThiQ), two transmembrane proteins (ThiP) and a solute-binding protein (ThiB).

It is found in the cell inner membrane. The enzyme catalyses thiamine(out) + ATP + H2O = thiamine(in) + ADP + phosphate + H(+). Its function is as follows. Part of the ABC transporter complex ThiBPQ involved in thiamine import. Responsible for energy coupling to the transport system. The protein is Thiamine import ATP-binding protein ThiQ of Haemophilus ducreyi (strain 35000HP / ATCC 700724).